Reading from the N-terminus, the 436-residue chain is UPF0597 protein YhaM (436 aa).

This sequence belongs to the UPF0597 family.

The chain is UPF0597 protein YhaM from Salmonella choleraesuis (strain SC-B67).